The chain runs to 712 residues: MTTQITYFATAARGFEEMLKTELEQICQAECKVTQGGVHFTTTQRGAYQALLHSRLASRILLPLVTTKIFSDLDLYATIVGINWAYIFDPRDTFFVDFNGTNREIRNTQFGAMRVKDGVVDYFERKGFTRPTVDKDHADIRIHVYLDRENMVVSLDLSGDALHMRGYREDTGKAPLRETLAAAIVLRSGWQKGTPLVDPMCGSGTLLIEAAQMQAGIAPQLHRKHWGFNAWKGHQQAVWKEVLEQAYLQQNEEIQPLFFGFDLDHRVLAKAKQNAKNAGVAHLIQWQQGDIAALKNPCPEQVGTVICNPPYGERLGTTPALIALYSVFGQRLKQQFSGWNASIFSGEPELLNCLRLRSHRQFKAKNGPLDCLQKNYQISERTAAEQQADELKFEQNAQVAPDFANRLAKNIKKIEKWAKQQGINAYRLYDADLPEYNLAVDRYDDHIVVQEYAAPKNIDEQKARQRLLDAVSATLYVTGVETNKLVLKVRQKQKGTNQYEKLANKGDYFYVTEYGAKLWVNLTDYLDTGLFLDHRLTRKMVGQMAKGKTFLNLFAYTGSATIHAALNGAKSTTTVDMSNTYLNWAEQNLELNNLPLRNNRLFQADCLQWLAECRERFELIFVDPPTFSNSKRMEDSWDVQRDHIKLMTQLKRILTTDGTIVFSNNKRGFKMDFEGLAELGLQAENISHKTLPLDFERNPQIHNCWIIRHIEN.

The THUMP domain occupies 46 to 157; that stretch reads GAYQALLHSR…RENMVVSLDL (112 aa).

The protein belongs to the methyltransferase superfamily. RlmKL family.

The protein resides in the cytoplasm. The enzyme catalyses guanosine(2445) in 23S rRNA + S-adenosyl-L-methionine = N(2)-methylguanosine(2445) in 23S rRNA + S-adenosyl-L-homocysteine + H(+). The catalysed reaction is guanosine(2069) in 23S rRNA + S-adenosyl-L-methionine = N(2)-methylguanosine(2069) in 23S rRNA + S-adenosyl-L-homocysteine + H(+). In terms of biological role, specifically methylates the guanine in position 2445 (m2G2445) and the guanine in position 2069 (m7G2069) of 23S rRNA. The polypeptide is Ribosomal RNA large subunit methyltransferase K/L (Actinobacillus pleuropneumoniae serotype 5b (strain L20)).